We begin with the raw amino-acid sequence, 38 residues long: Large ribosomal subunit protein bL36 (38 aa).

The protein belongs to the bacterial ribosomal protein bL36 family.

This Saccharophagus degradans (strain 2-40 / ATCC 43961 / DSM 17024) protein is Large ribosomal subunit protein bL36.